Reading from the N-terminus, the 191-residue chain is MDSINMTEKEKMTKGLMYDSFDEELCKDRTEARELIHRFNNSMDKLERKDITKQLFGSTGEKIYIEPTLRVDYGYNIHVGENFFANFGTIFLDTCPITIGKNAMLAPNVQFYSATHPIDPTERNSGLELGRPITIGDNVWIGGGVIILPGVELGDNVVVGAGAVVTKSFGSNVVIAGNPAKIIKQIPVKSE.

Belongs to the transferase hexapeptide repeat family.

The polypeptide is Putative acetyltransferase DDB_G0280825 (Dictyostelium discoideum (Social amoeba)).